Consider the following 173-residue polypeptide: NAD(P)H-quinone oxidoreductase subunit J (173 aa).

Belongs to the complex I 30 kDa subunit family. As to quaternary structure, NDH-1 can be composed of about 15 different subunits; different subcomplexes with different compositions have been identified which probably have different functions.

The protein localises to the cellular thylakoid membrane. The enzyme catalyses a plastoquinone + NADH + (n+1) H(+)(in) = a plastoquinol + NAD(+) + n H(+)(out). It carries out the reaction a plastoquinone + NADPH + (n+1) H(+)(in) = a plastoquinol + NADP(+) + n H(+)(out). Its function is as follows. NDH-1 shuttles electrons from an unknown electron donor, via FMN and iron-sulfur (Fe-S) centers, to quinones in the respiratory and/or the photosynthetic chain. The immediate electron acceptor for the enzyme in this species is believed to be plastoquinone. Couples the redox reaction to proton translocation, and thus conserves the redox energy in a proton gradient. Cyanobacterial NDH-1 also plays a role in inorganic carbon-concentration. In Prochlorococcus marinus (strain NATL1A), this protein is NAD(P)H-quinone oxidoreductase subunit J.